The primary structure comprises 381 residues: Chaperone protein DnaJ (381 aa).

The region spanning 5–73 (DYYEVLGVGK…EKKAAYDQYG (69 aa)) is the J domain. The CR-type zinc finger occupies 141–219 (GHEAQIRVPH…CHGQGKLKSQ (79 aa)). Residues cysteine 154, cysteine 157, cysteine 171, cysteine 174, cysteine 193, cysteine 196, cysteine 207, and cysteine 210 each coordinate Zn(2+). CXXCXGXG motif repeat units lie at residues 154 to 161 (CDHCHGNG), 171 to 178 (CPTCHGAG), 193 to 200 (CPKCHGSG), and 207 to 214 (CTKCHGQG). The tract at residues 357 to 381 (SVHEGGSRHSPQEQSWLDKVKSFFS) is disordered.

This sequence belongs to the DnaJ family. In terms of assembly, homodimer. The cofactor is Zn(2+).

It localises to the cytoplasm. Its function is as follows. Participates actively in the response to hyperosmotic and heat shock by preventing the aggregation of stress-denatured proteins and by disaggregating proteins, also in an autonomous, DnaK-independent fashion. Unfolded proteins bind initially to DnaJ; upon interaction with the DnaJ-bound protein, DnaK hydrolyzes its bound ATP, resulting in the formation of a stable complex. GrpE releases ADP from DnaK; ATP binding to DnaK triggers the release of the substrate protein, thus completing the reaction cycle. Several rounds of ATP-dependent interactions between DnaJ, DnaK and GrpE are required for fully efficient folding. Also involved, together with DnaK and GrpE, in the DNA replication of plasmids through activation of initiation proteins. The polypeptide is Chaperone protein DnaJ (Cupriavidus necator (strain ATCC 17699 / DSM 428 / KCTC 22496 / NCIMB 10442 / H16 / Stanier 337) (Ralstonia eutropha)).